The following is a 321-amino-acid chain: MVTVLDLVNQGKRERHPEKAHRPDNVVLKKPEWIRVKAPVSRGYSETRDIVRSNKLVTVCEEAGCPNIGECWEKKHATFMIMGEICTRACAFCNVSTGIPTALDPNEPENVAKAVKQMGLTHVVITSVDRDDLADGGAQHFAEVIQAIREATPATTIEILTPDFLRKEGALEVVVRARPDVFNHNLETVPSRYLKVRPGARYFHSIRLLQRVKELDPTIFTKSGIMVGLGEERNEILQLMDDLRSADVDFMTIGQYLQPTRKHHPVIRFVTPDEFKSFETIGRTKGFLLVASSPLTRSSHHAGDDFAKLRAAREAQISARA.

Positions 60, 65, 71, 86, 90, 93, and 299 each coordinate [4Fe-4S] cluster. The region spanning 72–288 (WEKKHATFMI…ETIGRTKGFL (217 aa)) is the Radical SAM core domain.

Belongs to the radical SAM superfamily. Lipoyl synthase family. The cofactor is [4Fe-4S] cluster.

Its subcellular location is the cytoplasm. It carries out the reaction [[Fe-S] cluster scaffold protein carrying a second [4Fe-4S](2+) cluster] + N(6)-octanoyl-L-lysyl-[protein] + 2 oxidized [2Fe-2S]-[ferredoxin] + 2 S-adenosyl-L-methionine + 4 H(+) = [[Fe-S] cluster scaffold protein] + N(6)-[(R)-dihydrolipoyl]-L-lysyl-[protein] + 4 Fe(3+) + 2 hydrogen sulfide + 2 5'-deoxyadenosine + 2 L-methionine + 2 reduced [2Fe-2S]-[ferredoxin]. The protein operates within protein modification; protein lipoylation via endogenous pathway; protein N(6)-(lipoyl)lysine from octanoyl-[acyl-carrier-protein]: step 2/2. Catalyzes the radical-mediated insertion of two sulfur atoms into the C-6 and C-8 positions of the octanoyl moiety bound to the lipoyl domains of lipoate-dependent enzymes, thereby converting the octanoylated domains into lipoylated derivatives. This is Lipoyl synthase from Brucella anthropi (strain ATCC 49188 / DSM 6882 / CCUG 24695 / JCM 21032 / LMG 3331 / NBRC 15819 / NCTC 12168 / Alc 37) (Ochrobactrum anthropi).